The following is a 243-amino-acid chain: Histone H2B.2 (243 aa).

Alanine 2 carries the post-translational modification N,N,N-trimethylalanine; alternate. Alanine 2 is modified (n,N-dimethylalanine; alternate). Residue alanine 2 is modified to N-methylalanine; alternate. A disordered region spans residues 67 to 145 (PDERSLPVGE…KKKKKKKRDD (79 aa)). Residues 120–132 (GTLKKTDKVEKKQ) are compositionally biased toward basic and acidic residues. Over residues 133–142 (ENKKKKKKKK) the composition is skewed to basic residues.

The protein belongs to the histone H2B family. As to quaternary structure, the nucleosome is a histone octamer containing two molecules each of H2A, H2B, H3 and H4 assembled in one H3-H4 heterotetramer and two H2A-H2B heterodimers. The octamer wraps approximately 147 bp of DNA. Can be acetylated to form H2BK6ac.

The protein localises to the nucleus. It localises to the chromosome. In terms of biological role, core component of nucleosome. Nucleosomes wrap and compact DNA into chromatin, limiting DNA accessibility to the cellular machineries which require DNA as a template. Histones thereby play a central role in transcription regulation, DNA repair, DNA replication and chromosomal stability. DNA accessibility is regulated via a complex set of post-translational modifications of histones, also called histone code, and nucleosome remodeling. The polypeptide is Histone H2B.2 (Arabidopsis thaliana (Mouse-ear cress)).